The following is a 276-amino-acid chain: Tyrosinase (276 aa).

Cu cation is bound by residues His-38, His-56, His-66, His-193, His-197, and His-219.

It belongs to the tyrosinase family. Cu(2+) serves as cofactor.

The catalysed reaction is 2 L-dopa + O2 = 2 L-dopaquinone + 2 H2O. The enzyme catalyses L-tyrosine + O2 = L-dopaquinone + H2O. In terms of biological role, this is a copper-containing oxidase that functions in the formation of pigments such as melanins and other polyphenolic compounds. This is Tyrosinase (melC2) from Streptomyces galbus.